Consider the following 131-residue polypeptide: Transcription antitermination protein NusB (131 aa).

The protein belongs to the NusB family.

Its function is as follows. Involved in transcription antitermination. Required for transcription of ribosomal RNA (rRNA) genes. Binds specifically to the boxA antiterminator sequence of the ribosomal RNA (rrn) operons. The polypeptide is Transcription antitermination protein NusB (Bacillus subtilis (strain 168)).